The primary structure comprises 165 residues: Large ribosomal subunit protein uL10 (165 aa).

Belongs to the universal ribosomal protein uL10 family. As to quaternary structure, part of the ribosomal stalk of the 50S ribosomal subunit. The N-terminus interacts with L11 and the large rRNA to form the base of the stalk. The C-terminus forms an elongated spine to which L12 dimers bind in a sequential fashion forming a multimeric L10(L12)X complex.

In terms of biological role, forms part of the ribosomal stalk, playing a central role in the interaction of the ribosome with GTP-bound translation factors. The protein is Large ribosomal subunit protein uL10 of Burkholderia cenocepacia (strain HI2424).